A 129-amino-acid chain; its full sequence is Lysozyme C-1/C-2 (129 aa).

The C-type lysozyme domain occupies 1–129; sequence KVFERCELAR…VSSYVEGCTL (129 aa). 4 cysteine pairs are disulfide-bonded: cysteine 6/cysteine 127, cysteine 30/cysteine 115, cysteine 65/cysteine 81, and cysteine 77/cysteine 95. Active-site residues include glutamate 35 and aspartate 53.

The protein belongs to the glycosyl hydrolase 22 family. As to quaternary structure, monomer.

The catalysed reaction is Hydrolysis of (1-&gt;4)-beta-linkages between N-acetylmuramic acid and N-acetyl-D-glucosamine residues in a peptidoglycan and between N-acetyl-D-glucosamine residues in chitodextrins.. Functionally, lysozymes have primarily a bacteriolytic function; those in tissues and body fluids are associated with the monocyte-macrophage system and enhance the activity of immunoagents. The protein is Lysozyme C-1/C-2 of Axis axis (Axis deer).